A 347-amino-acid chain; its full sequence is CD5 antigen-like (347 aa).

An N-terminal signal peptide occupies residues 1-19; sequence MALLFSLILAICTRPGFLA. SRCR domains are found at residues 24–125, 138–239, and 244–346; these read VRLV…ASCE, VRLA…VECE, and LRLV…VICS. 11 cysteine pairs are disulfide-bonded: Cys-33/Cys-67, Cys-49/Cys-114, Cys-62/Cys-124, Cys-96/Cys-106, Cys-163/Cys-228, Cys-176/Cys-238, Cys-208/Cys-218, Cys-253/Cys-287, Cys-269/Cys-335, Cys-282/Cys-345, and Cys-315/Cys-325.

Interacts with FASN; the interaction is direct. Interacts (via SRCR2 and SRCR3) with pentameric IgM (via Fc region); disulfide-linked. Post-translationally, not N-glycosylated. Probably not O-glycosylated. In terms of tissue distribution, expressed in spleen, lymph node, thymus, bone marrow, and fetal liver, but not in non-lymphoid tissues.

It is found in the secreted. The protein localises to the cytoplasm. Its function is as follows. Secreted protein that acts as a key regulator of lipid synthesis: mainly expressed by macrophages in lymphoid and inflamed tissues and regulates mechanisms in inflammatory responses, such as infection or atherosclerosis. Able to inhibit lipid droplet size in adipocytes. Following incorporation into mature adipocytes via CD36-mediated endocytosis, associates with cytosolic FASN, inhibiting fatty acid synthase activity and leading to lipolysis, the degradation of triacylglycerols into glycerol and free fatty acids (FFA). CD5L-induced lipolysis occurs with progression of obesity: participates in obesity-associated inflammation following recruitment of inflammatory macrophages into adipose tissues, a cause of insulin resistance and obesity-related metabolic disease. Regulation of intracellular lipids mediated by CD5L has a direct effect on transcription regulation mediated by nuclear receptors ROR-gamma (RORC). Acts as a key regulator of metabolic switch in T-helper Th17 cells. Regulates the expression of pro-inflammatory genes in Th17 cells by altering the lipid content and limiting synthesis of cholesterol ligand of RORC, the master transcription factor of Th17-cell differentiation. CD5L is mainly present in non-pathogenic Th17 cells, where it decreases the content of polyunsaturated fatty acyls (PUFA), affecting two metabolic proteins MSMO1 and CYP51A1, which synthesize ligands of RORC, limiting RORC activity and expression of pro-inflammatory genes. Participates in obesity-associated autoimmunity via its association with IgM, interfering with the binding of IgM to Fcalpha/mu receptor and enhancing the development of long-lived plasma cells that produce high-affinity IgG autoantibodies. Also acts as an inhibitor of apoptosis in macrophages: promotes macrophage survival from the apoptotic effects of oxidized lipids in case of atherosclerosis. Involved in early response to microbial infection against various pathogens by acting as a pattern recognition receptor and by promoting autophagy. This chain is CD5 antigen-like (CD5L), found in Homo sapiens (Human).